The primary structure comprises 602 residues: UvrABC system protein C (602 aa).

In terms of domain architecture, GIY-YIG spans 17 to 94; it reads TTSGCYKMYS…IKEHKPDYNI (78 aa). One can recognise a UVR domain in the interval 199 to 234; the sequence is SKLLDEIEIKMKEVIKREDFESAIKLKETKRSLIEI.

Belongs to the UvrC family. As to quaternary structure, interacts with UvrB in an incision complex.

It localises to the cytoplasm. Its function is as follows. The UvrABC repair system catalyzes the recognition and processing of DNA lesions. UvrC both incises the 5' and 3' sides of the lesion. The N-terminal half is responsible for the 3' incision and the C-terminal half is responsible for the 5' incision. This Borrelia turicatae (strain 91E135) protein is UvrABC system protein C.